Reading from the N-terminus, the 1002-residue chain is Lon protease homolog, mitochondrial (1002 aa).

One can recognise a Lon N-terminal domain in the interval 102–313 (VIALPLPHRP…LTLELVKKEM (212 aa)). Residue 468-475 (GPPGVGKT) coordinates ATP. In terms of domain architecture, Lon proteolytic spans 811–995 (QTPVGVVMGL…NEIFDIAFQS (185 aa)). Catalysis depends on residues Ser-901 and Lys-944.

This sequence belongs to the peptidase S16 family. In terms of assembly, homohexamer or homoheptamer. Organized in a ring with a central cavity.

It is found in the mitochondrion matrix. The enzyme catalyses Hydrolysis of proteins in presence of ATP.. In terms of biological role, ATP-dependent serine protease that mediates the selective degradation of misfolded, unassembled or oxidatively damaged polypeptides as well as certain short-lived regulatory proteins in the mitochondrial matrix. May also have a chaperone function in the assembly of inner membrane protein complexes. Participates in the regulation of mitochondrial gene expression and in the maintenance of the integrity of the mitochondrial genome. Binds to mitochondrial DNA in a site-specific manner. The protein is Lon protease homolog, mitochondrial of Oryza sativa subsp. indica (Rice).